Here is a 189-residue protein sequence, read N- to C-terminus: Small ribosomal subunit protein uS7 (189 aa).

It belongs to the universal ribosomal protein uS7 family. Component of the small ribosomal subunit.

The protein localises to the cytoplasm. In Encephalitozoon cuniculi (strain GB-M1) (Microsporidian parasite), this protein is Small ribosomal subunit protein uS7 (RPS5).